The chain runs to 356 residues: Chitin elicitor-binding protein (356 aa).

Positions M1–A28 are cleaved as a signal peptide. N30 is a glycosylation site (N-linked (GlcNAc...) asparagine). 4 disulfide bridges follow: C33–C100, C41–C164, C98–C162, and C100–C164. A chitin-binding site is contributed by P50 to N51. N63 and N89 each carry an N-linked (GlcNAc...) asparagine glycan. LysM domains lie at P111–I158 and L175–V219. Residues P117–A123, N142, P145–V152, T155, and G182 contribute to the chitin site. N-linked (GlcNAc...) asparagine glycosylation occurs at N151. N184 is a glycosylation site (N-linked (GlcNAc...) asparagine). Residues S186 and L211–M213 contribute to the chitin site. 2 disulfide bridges follow: C224–C257 and C252–C274. N265, N281, N290, N306, and N319 each carry an N-linked (GlcNAc...) asparagine glycan. The chain crosses the membrane as a helical span at residues R336 to L356.

As to quaternary structure, forms homooligomer. Interacts with CERK1. Binds to chitin oligosaccharide elicitor. Interacts with LYP4 and LYP6. In terms of processing, N-glycosylated. As to expression, expressed in seedlings, roots, shoots, stems and flowers.

Its subcellular location is the cell membrane. Chitin elicitor-binding protein involved in the perception and transduction of chitin oligosaccharide elicitor signal for defense responses. The chain is Chitin elicitor-binding protein from Oryza sativa subsp. japonica (Rice).